The sequence spans 531 residues: Berberine bridge enzyme-like 9 (531 aa).

Positions 1–23 are cleaved as a signal peptide; that stretch reads MTSLTTQTLIITIFLLTIPTSFA. A disulfide bond links Cys35 and Cys99. N-linked (GlcNAc...) asparagine glycosylation is found at Asn76, Asn164, Asn271, Asn300, Asn314, Asn400, and Asn485. In terms of domain architecture, FAD-binding PCMH-type spans 77–252; the sequence is MTRKPVAIVA…LAWKIKLVPV (176 aa). A cross-link (6-(S-cysteinyl)-8alpha-(pros-histidyl)-FAD (His-Cys)) is located at residues 114–177; it reads HDYDGMSYLS…DLRGFPAGIC (64 aa).

Belongs to the oxygen-dependent FAD-linked oxidoreductase family. Requires FAD as cofactor. The FAD cofactor is bound via a bicovalent 6-S-cysteinyl, 8alpha-N1-histidyl FAD linkage. Accumulates in cell walls of etiolated hypocotyls.

It localises to the secreted. The protein resides in the cell wall. In Arabidopsis thaliana (Mouse-ear cress), this protein is Berberine bridge enzyme-like 9.